The primary structure comprises 103 residues: Large ribosomal subunit protein bL21 (103 aa).

It belongs to the bacterial ribosomal protein bL21 family. As to quaternary structure, part of the 50S ribosomal subunit. Contacts protein L20.

Functionally, this protein binds to 23S rRNA in the presence of protein L20. The protein is Large ribosomal subunit protein bL21 of Amoebophilus asiaticus (strain 5a2).